The following is a 201-amino-acid chain: Peptidyl-tRNA hydrolase (201 aa).

Tyr-15 provides a ligand contact to tRNA. His-20 functions as the Proton acceptor in the catalytic mechanism. TRNA contacts are provided by Tyr-66, Asn-68, and Asn-114.

Belongs to the PTH family. In terms of assembly, monomer.

The protein resides in the cytoplasm. The enzyme catalyses an N-acyl-L-alpha-aminoacyl-tRNA + H2O = an N-acyl-L-amino acid + a tRNA + H(+). In terms of biological role, hydrolyzes ribosome-free peptidyl-tRNAs (with 1 or more amino acids incorporated), which drop off the ribosome during protein synthesis, or as a result of ribosome stalling. Functionally, catalyzes the release of premature peptidyl moieties from peptidyl-tRNA molecules trapped in stalled 50S ribosomal subunits, and thus maintains levels of free tRNAs and 50S ribosomes. The polypeptide is Peptidyl-tRNA hydrolase (Burkholderia pseudomallei (strain K96243)).